The sequence spans 425 residues: Glutamate-1-semialdehyde 2,1-aminomutase (425 aa).

Lysine 265 is modified (N6-(pyridoxal phosphate)lysine).

The protein belongs to the class-III pyridoxal-phosphate-dependent aminotransferase family. HemL subfamily. In terms of assembly, homodimer. Pyridoxal 5'-phosphate is required as a cofactor.

The protein localises to the cytoplasm. The catalysed reaction is (S)-4-amino-5-oxopentanoate = 5-aminolevulinate. Its pathway is porphyrin-containing compound metabolism; protoporphyrin-IX biosynthesis; 5-aminolevulinate from L-glutamyl-tRNA(Glu): step 2/2. This Opitutus terrae (strain DSM 11246 / JCM 15787 / PB90-1) protein is Glutamate-1-semialdehyde 2,1-aminomutase.